Here is a 235-residue protein sequence, read N- to C-terminus: Sugar fermentation stimulation protein homolog (235 aa).

Belongs to the SfsA family.

This chain is Sugar fermentation stimulation protein homolog, found in Aliivibrio salmonicida (strain LFI1238) (Vibrio salmonicida (strain LFI1238)).